Consider the following 125-residue polypeptide: MRPPPDPQARRRATHGRGLSAEALALLALMLKGYRPLARRFAASGGEIDLIVRRGRTIAFVEVKARATLEAAAIAIDGRKRARMSRAARAWLARHRLPADAILRADAVFVAPRRWPLHLPNAFEI.

Belongs to the UPF0102 family.

In Methylorubrum populi (strain ATCC BAA-705 / NCIMB 13946 / BJ001) (Methylobacterium populi), this protein is UPF0102 protein Mpop_0474.